A 610-amino-acid polypeptide reads, in one-letter code: Manganese lipoxygenase (610 aa).

An N-terminal signal peptide occupies residues 1–16 (MVALLIFLGIFTCVET). Positions 47-610 (FTLPNEDDEI…PGVIPFYLSV (564 aa)) constitute a Lipoxygenase domain. Residues N157 and N259 are each glycosylated (N-linked (GlcNAc...) asparagine). Mn(2+) is bound by residues H290 and H295. A glycan (N-linked (GlcNAc...) asparagine) is linked at N386. Positions 475 and 479 each coordinate Mn(2+). N540 carries N-linked (GlcNAc...) asparagine glycosylation. Residue V610 coordinates Mn(2+).

This sequence belongs to the lipoxygenase family. Manganese lipoxygenase subfamily. The cofactor is Mn(2+). Post-translationally, N- and O-glycosylated.

It is found in the secreted. The enzyme catalyses (9Z,12Z)-octadecadienoate + O2 = (11S)-hydroperoxy-(9Z,12Z)-octadecadienoate. It carries out the reaction (9Z,12Z)-octadecadienoate + O2 = (11R)-hydroperoxy-(9Z,12Z)-octadecadienoate. The catalysed reaction is (9Z,12Z)-octadecadienoate + O2 = (13S)-hydroperoxy-(9Z,11E)-octadecadienoate. It catalyses the reaction (9Z,12Z,15Z)-octadecatrienoate + O2 = (11S)-hydroperoxy-(9Z,12Z,15Z)-octadecatrienoate. In terms of biological role, lipoxygenase that metabolizes linoleic and alpha-linolenic acids to 9-, 11- and 13-hydroperoxy fatty acids. Oxidizes linoleic acid to mainly 11R-, 13S- and racemic 9-HPODE, and alpha-linolenic acid to 11-HPOTrE. In Fusarium oxysporum (strain Fo5176) (Fusarium vascular wilt), this protein is Manganese lipoxygenase.